A 354-amino-acid chain; its full sequence is Homer protein homolog 2 (354 aa).

Positions 1 to 110 (MGEQPIFTTR…EKFQEVKEAA (110 aa)) constitute a WH1 domain. Residues 92–122 (SEQQLTKFAEKFQEVKEAAKIAKDKTQEKIE) are a coiled coil. Basic and acidic residues predominate over residues 112-122 (IAKDKTQEKIE). The segment at 112 to 166 (IAKDKTQEKIETSSNHSQESGRETPSSTQASSVNGTDDEKASHAGPANTHLKSEN) is disordered. Residues 123-146 (TSSNHSQESGRETPSSTQASSVNG) are compositionally biased toward polar residues. Residues 160–329 (THLKSENDKL…RHLKVELKSF (170 aa)) adopt a coiled-coil conformation.

Belongs to the Homer family. As to quaternary structure, forms coiled-coil structures that mediate homo- and heteromultimerization. Interacts with NFATC2; interaction is reduced by AKT activation. Interacts with NFATC1 and NFATC4. Interacts with DAGLA (via PPXXF motif); this interaction is required for the cell membrane localization of DAGLA.

Its subcellular location is the cytoplasm. The protein localises to the cell membrane. It is found in the postsynaptic density. The protein resides in the synapse. It localises to the cell projection. Its subcellular location is the stereocilium. Functionally, postsynaptic density scaffolding protein. Binds and cross-links cytoplasmic regions of GRM1, GRM5, ITPR1, DNM3, RYR1, RYR2, SHANK1 and SHANK3. By physically linking GRM1 and GRM5 with ER-associated ITPR1 receptors, it aids the coupling of surface receptors to intracellular calcium release. May also couple GRM1 to PI3 kinase through its interaction with AGAP2. Isoforms can be differently regulated and may play an important role in maintaining the plasticity at glutamatergic synapses. Required for normal hearing. Negatively regulates T cell activation by inhibiting the calcineurin-NFAT pathway. Acts by competing with calcineurin/PPP3CA for NFAT protein binding, hence preventing NFAT activation by PPP3CA. This chain is Homer protein homolog 2, found in Homo sapiens (Human).